The sequence spans 221 residues: Protein GrpE 1 (221 aa).

Disordered regions lie at residues 1 to 44 and 192 to 221; these read MTEE…AAAQ and VAEPQPGAQTVKADEAEAADDKESGGPEEG. The segment covering 26-44 has biased composition (low complexity); it reads KAAPSEGAAPAGDAAAAAQ. Residues 203–221 are compositionally biased toward basic and acidic residues; it reads KADEAEAADDKESGGPEEG.

This sequence belongs to the GrpE family. In terms of assembly, homodimer.

Its subcellular location is the cytoplasm. Functionally, participates actively in the response to hyperosmotic and heat shock by preventing the aggregation of stress-denatured proteins, in association with DnaK and GrpE. It is the nucleotide exchange factor for DnaK and may function as a thermosensor. Unfolded proteins bind initially to DnaJ; upon interaction with the DnaJ-bound protein, DnaK hydrolyzes its bound ATP, resulting in the formation of a stable complex. GrpE releases ADP from DnaK; ATP binding to DnaK triggers the release of the substrate protein, thus completing the reaction cycle. Several rounds of ATP-dependent interactions between DnaJ, DnaK and GrpE are required for fully efficient folding. The protein is Protein GrpE 1 of Streptomyces avermitilis (strain ATCC 31267 / DSM 46492 / JCM 5070 / NBRC 14893 / NCIMB 12804 / NRRL 8165 / MA-4680).